The following is a 266-amino-acid chain: 4-hydroxy-tetrahydrodipicolinate reductase (266 aa).

NAD(+) is bound by residues 8 to 13 (GAAGRM) and glutamate 33. Arginine 34 contacts NADP(+). NAD(+)-binding positions include 97 to 99 (GST) and 121 to 124 (APNM). The active-site Proton donor/acceptor is histidine 154. Histidine 155 is a (S)-2,3,4,5-tetrahydrodipicolinate binding site. The active-site Proton donor is lysine 158. Position 164–165 (164–165 (GT)) interacts with (S)-2,3,4,5-tetrahydrodipicolinate.

Belongs to the DapB family.

It localises to the cytoplasm. The enzyme catalyses (S)-2,3,4,5-tetrahydrodipicolinate + NAD(+) + H2O = (2S,4S)-4-hydroxy-2,3,4,5-tetrahydrodipicolinate + NADH + H(+). The catalysed reaction is (S)-2,3,4,5-tetrahydrodipicolinate + NADP(+) + H2O = (2S,4S)-4-hydroxy-2,3,4,5-tetrahydrodipicolinate + NADPH + H(+). It participates in amino-acid biosynthesis; L-lysine biosynthesis via DAP pathway; (S)-tetrahydrodipicolinate from L-aspartate: step 4/4. Its function is as follows. Catalyzes the conversion of 4-hydroxy-tetrahydrodipicolinate (HTPA) to tetrahydrodipicolinate. The protein is 4-hydroxy-tetrahydrodipicolinate reductase of Geobacter sulfurreducens (strain ATCC 51573 / DSM 12127 / PCA).